Reading from the N-terminus, the 183-residue chain is Tumor necrosis factor ligand superfamily member 4 (183 aa).

Topologically, residues 1–23 (MERVQPLEENVGNAARPRFERNK) are cytoplasmic. The helical; Signal-anchor for type II membrane protein transmembrane segment at 24 to 50 (LLLVASVIQGLGLLLCFTYICLHFSAL) threads the bilayer. The THD domain maps to 51–173 (QVSHRYPRIQ…HVNGGELILI (123 aa)). Residues 51–183 (QVSHRYPRIQ…HQNPGEFCVL (133 aa)) lie on the Extracellular side of the membrane. N-linked (GlcNAc...) asparagine glycosylation is found at Asn90, Asn114, Asn152, and Asn157. A disulfide bridge links Cys97 with Cys181.

This sequence belongs to the tumor necrosis factor family. In terms of assembly, homotrimer.

The protein localises to the membrane. Functionally, cytokine that binds to TNFRSF4. Co-stimulates T-cell proliferation and cytokine production. The chain is Tumor necrosis factor ligand superfamily member 4 (TNFSF4) from Homo sapiens (Human).